Here is a 327-residue protein sequence, read N- to C-terminus: 4-hydroxy-2-oxoglutarate aldolase, mitochondrial (327 aa).

A mitochondrion-targeting transit peptide spans methionine 1 to tryptophan 25. Serine 77 to asparagine 78 lines the substrate pocket. Residue lysine 196 is the Schiff-base intermediate with substrate of the active site. Residues serine 198 and glycine 222 each contribute to the substrate site.

It belongs to the DapA family. Homotetramer.

The protein resides in the mitochondrion. It carries out the reaction (4S)-4-hydroxy-2-oxoglutarate = glyoxylate + pyruvate. The catalysed reaction is (4R)-4-hydroxy-2-oxoglutarate = glyoxylate + pyruvate. Its activity is regulated as follows. Inhibited by divalent cations. Catalyzes the final step in the metabolic pathway of hydroxyproline. The sequence is that of 4-hydroxy-2-oxoglutarate aldolase, mitochondrial (HOGA1) from Bos taurus (Bovine).